A 101-amino-acid chain; its full sequence is Large ribosomal subunit protein uL23 (101 aa).

Belongs to the universal ribosomal protein uL23 family. Part of the 50S ribosomal subunit. Contacts protein L29, and trigger factor when it is bound to the ribosome.

Its function is as follows. One of the early assembly proteins it binds 23S rRNA. One of the proteins that surrounds the polypeptide exit tunnel on the outside of the ribosome. Forms the main docking site for trigger factor binding to the ribosome. In Micrococcus luteus (strain ATCC 4698 / DSM 20030 / JCM 1464 / CCM 169 / CCUG 5858 / IAM 1056 / NBRC 3333 / NCIMB 9278 / NCTC 2665 / VKM Ac-2230) (Micrococcus lysodeikticus), this protein is Large ribosomal subunit protein uL23.